A 200-amino-acid chain; its full sequence is Probable GTP-binding protein EngB (200 aa).

In terms of domain architecture, EngB-type G spans 23 to 197 (KNSEVVFIGR…RERVLKDVLG (175 aa)). GTP-binding positions include 31–38 (GRSNVGKS), 58–62 (GKTQL), 83–86 (DLPG), 153–156 (TKMD), and 175–177 (FTA). Residues Ser38 and Thr60 each coordinate Mg(2+).

The protein belongs to the TRAFAC class TrmE-Era-EngA-EngB-Septin-like GTPase superfamily. EngB GTPase family. Requires Mg(2+) as cofactor.

Necessary for normal cell division and for the maintenance of normal septation. The chain is Probable GTP-binding protein EngB from Wolinella succinogenes (strain ATCC 29543 / DSM 1740 / CCUG 13145 / JCM 31913 / LMG 7466 / NCTC 11488 / FDC 602W) (Vibrio succinogenes).